The chain runs to 245 residues: MRNLKMILEYDGTRYKGWQKQKKDVLTIQDKIETVLSKMTGEDIQVIGCGRTDAGVHAENYVANFHTNCDFTVDYMLDYLYEFLPEDIVVKTMKDTSERFHARYNVKSKTYVYRINNNKFRSVFNKKYAYHDNEKLNISAMKDAAEFLIGTHDFKSFTRLKSNSKSTIRAIKYINITENQGIISIEVNGNGFLLNMVRIVAGALLEVGKENIKPIDIEKMLNEKKRADASLILPAKGLCLKDIQY.

The Nucleophile role is filled by D53. Y111 lines the substrate pocket.

It belongs to the tRNA pseudouridine synthase TruA family. Homodimer.

It catalyses the reaction uridine(38/39/40) in tRNA = pseudouridine(38/39/40) in tRNA. In terms of biological role, formation of pseudouridine at positions 38, 39 and 40 in the anticodon stem and loop of transfer RNAs. The chain is tRNA pseudouridine synthase A 1 from Clostridium tetani (strain Massachusetts / E88).